Reading from the N-terminus, the 530-residue chain is Cytochrome P450 monooxygenase apf7 (530 aa).

The helical transmembrane segment at 6-26 (VSPVSIWVFVIYAVTIIIAIY) threads the bilayer. Residue Asn-85 is glycosylated (N-linked (GlcNAc...) asparagine). Cys-464 provides a ligand contact to heme.

The protein belongs to the cytochrome P450 family. It depends on heme as a cofactor.

The protein localises to the membrane. Its pathway is secondary metabolite biosynthesis. In terms of biological role, cytochrome P450 monooxygenase; part of the gene cluster that mediates the biosynthesis of the cyclic tetrapeptide apicidin F (APF). The non-ribosomal peptide synthetase apf1 incorporates four different amino acids to produce apicidin F: L-phenylalanine, D-pipecolic acid (D-pip), N-methoxy-L-tryptophan and L-2-aminooctanedioic acid. L-Phenylalanine is the only proteinogenic amino acid directly used by apf1. The 3 other apf1 substrates are non-proteinogenic and have to be modified by other enzymes of the cluster. Lysine is converted to delta-1-pyrroline-5-carboxylate (P5C) which is reduced to L-pipecolic acid (L-pip) by apf3. L-pip is epimerized to D-pip, probably by apf1 activity, prior to incorporation. L-Tryptophan is N-oxidyzed by one of the cytochrome P450 monooxygenases (apf7 or apf8), and further methylated at the hydroxy group by the O-methyltransferase apf6 to yield N-methoxy-L-tryptophan. The synthesis of the fourth apf1 substrate is more complex. The fatty acid synthase apf5 is involved in the synthesis of the octanoic acid backbone of L-2-aminooctanedioic acid by fixing one acetyl-CoA unit and three malonyl-CoA units. Then one of the cytochrome P450 monooxygenases (apf7 or apf8) may oxidize this backbone to 2-oxooctanoic acid. The aminotransferase apf4 is predicted to catalyze the exchange of the keto group with an amino group. The next step would be the oxidation of 2-aminooctanoic acid by one of the cytochrome P450 monooxygenases (apf7 or apf8). The last step is the oxidation of 2-amino-8-hydroxyoctanoic acid to 2-aminooctanedioic acid is catalyzed by the FAD-dependent monooxygenase apf9. The protein is Cytochrome P450 monooxygenase apf7 of Gibberella fujikuroi (strain CBS 195.34 / IMI 58289 / NRRL A-6831) (Bakanae and foot rot disease fungus).